We begin with the raw amino-acid sequence, 156 residues long: ATP synthase subunit b (156 aa).

The chain crosses the membrane as a helical span at residues Met-1–Val-21.

This sequence belongs to the ATPase B chain family. In terms of assembly, F-type ATPases have 2 components, F(1) - the catalytic core - and F(0) - the membrane proton channel. F(1) has five subunits: alpha(3), beta(3), gamma(1), delta(1), epsilon(1). F(0) has three main subunits: a(1), b(2) and c(10-14). The alpha and beta chains form an alternating ring which encloses part of the gamma chain. F(1) is attached to F(0) by a central stalk formed by the gamma and epsilon chains, while a peripheral stalk is formed by the delta and b chains.

The protein localises to the cell inner membrane. In terms of biological role, f(1)F(0) ATP synthase produces ATP from ADP in the presence of a proton or sodium gradient. F-type ATPases consist of two structural domains, F(1) containing the extramembraneous catalytic core and F(0) containing the membrane proton channel, linked together by a central stalk and a peripheral stalk. During catalysis, ATP synthesis in the catalytic domain of F(1) is coupled via a rotary mechanism of the central stalk subunits to proton translocation. Functionally, component of the F(0) channel, it forms part of the peripheral stalk, linking F(1) to F(0). The polypeptide is ATP synthase subunit b (Nitrosococcus oceani (strain ATCC 19707 / BCRC 17464 / JCM 30415 / NCIMB 11848 / C-107)).